We begin with the raw amino-acid sequence, 440 residues long: MGDWSFLGNILEEVNEHSTVIGRVWLTVLFIFRILILGTAAEFVWGDEQSDFVCNTQQPGCENVCYDEAFPISHIRLWVLQIIFVSTPSLMYVGHAVHHVRMEEKRKDREAEELCQQSRSNGGERVPIAPDQASIRKSSSSSKGTKKFRLEGTLLRTYVCHIIFKTLFEVGFIVGHYFLYGFRILPLYRCSRWPCPNVVDCFVSRPTEKTIFILFMLSVAFVSLFLNIMEMSHLGMKGIRSAFKRPVEQPLGEIAEKSLHSIAVSSIQKAKGYQLLEEEKIVSHYFPLTEVGMVETSPLSAKPFSQFEEKIGTGPLADMSRSYQETLPSYAQVGVQEVEREEPPIEEAVEPEVGEKKQEAEKVAPEGQETVAVPDRERVETPGVGKEDEKEELQAEKVTKQGLSAEKAPSLCPELTTDDNRPLSRLSKASSRARSDDLTI.

An intramembrane segment occupies 2-12 (GDWSFLGNILE). The Cytoplasmic portion of the chain corresponds to 13–21 (EVNEHSTVI). Residues 22–42 (GRVWLTVLFIFRILILGTAAE) form a helical membrane-spanning segment. The Extracellular segment spans residues 43–71 (FVWGDEQSDFVCNTQQPGCENVCYDEAFP). Disulfide bonds link Cys54/Cys201, Cys61/Cys195, and Cys65/Cys190. A helical transmembrane segment spans residues 72–92 (ISHIRLWVLQIIFVSTPSLMY). Over 93 to 161 (VGHAVHHVRM…GTLLRTYVCH (69 aa)) the chain is Cytoplasmic. The tract at residues 111-143 (AEELCQQSRSNGGERVPIAPDQASIRKSSSSSK) is disordered. Residues 162-182 (IIFKTLFEVGFIVGHYFLYGF) form a helical membrane-spanning segment. The Extracellular segment spans residues 183–210 (RILPLYRCSRWPCPNVVDCFVSRPTEKT). The helical transmembrane segment at 211 to 231 (IFILFMLSVAFVSLFLNIMEM) threads the bilayer. At 232–440 (SHLGMKGIRS…SRARSDDLTI (209 aa)) the chain is on the cytoplasmic side. Residues 338–440 (VEREEPPIEE…SRARSDDLTI (103 aa)) form a disordered region. Composition is skewed to basic and acidic residues over residues 353–364 (VGEKKQEAEKVA) and 374–399 (PDRE…EKVT). Residues 423–432 (LSRLSKASSR) are compositionally biased toward low complexity.

This sequence belongs to the connexin family. Alpha-type (group II) subfamily. As to quaternary structure, a hemichannel or connexon is composed of a hexamer of connexins. A functional gap junction is formed by the apposition of two hemichannels. Forms heteromeric channels with GJA3. Detected in eye lens (at protein level). Eye lens.

It localises to the cell membrane. It is found in the cell junction. The protein localises to the gap junction. Its function is as follows. Structural component of eye lens gap junctions. Gap junctions are dodecameric channels that connect the cytoplasm of adjoining cells. They are formed by the docking of two hexameric hemichannels, one from each cell membrane. Small molecules and ions diffuse from one cell to a neighboring cell via the central pore. The chain is Gap junction alpha-8 protein (Gja8) from Mus musculus (Mouse).